Consider the following 288-residue polypeptide: GCN5-related N-acetyltransferase 6, chloroplastic (288 aa).

Residues 1-111 constitute a chloroplast transit peptide; sequence MSTISIHRTE…YWTAAWLRAE (111 aa). One can recognise an N-acetyltransferase domain in the interval 151–288; that stretch reads SCIVAVKKEE…DDTYLLQYTS (138 aa). Residues 215–217, 223–228, 254–256, and tyrosine 261 contribute to the acetyl-CoA site; these read LCV, RQGIAC, and NSV. Tyrosine 261 (proton donor) is an active-site residue.

The protein belongs to the acetyltransferase family. GNAT subfamily. Oligomer. In terms of processing, autoacetylated. In terms of tissue distribution, expressed in green tissues and in roots.

The protein localises to the plastid. The protein resides in the chloroplast. Its subcellular location is the cytoplasm. It is found in the perinuclear region. It carries out the reaction an N-terminal L-alpha-aminoacyl-[protein] + acetyl-CoA = N-terminal N(alpha)-acetyl-L-alpha-aminoacyl-[protein] + CoA + H(+). The enzyme catalyses L-lysyl-[protein] + acetyl-CoA = N(6)-acetyl-L-lysyl-[protein] + CoA + H(+). It catalyses the reaction N-terminal L-alanyl-[protein] + acetyl-CoA = N-terminal N(alpha)-acetyl-L-alanyl-[protein] + CoA + H(+). The catalysed reaction is N-terminal L-seryl-[protein] + acetyl-CoA = N-terminal N(alpha)-acetyl-L-seryl-[protein] + CoA + H(+). It carries out the reaction N-terminal L-threonyl-[protein] + acetyl-CoA = N-terminal N(alpha)-acetyl-L-threonyl-[protein] + CoA + H(+). The enzyme catalyses N-terminal L-methionyl-[protein] + acetyl-CoA = N-terminal N(alpha)-acetyl-L-methionyl-[protein] + CoA + H(+). It catalyses the reaction N-terminal L-valyl-[protein] + acetyl-CoA = N-terminal N(alpha)-acetyl-L-valyl-[protein] + CoA + H(+). Its function is as follows. Protein acetyltransferase with dual specificity triggering both N-alpha-acetylation (NTA), with a large spectrum of modified N-termini, including methionine, alanine, serine, threonine and to a lower extent valine as substrates, and epsilon-lysine acetylation (KA). The polypeptide is GCN5-related N-acetyltransferase 6, chloroplastic (Arabidopsis thaliana (Mouse-ear cress)).